The chain runs to 394 residues: Elongation factor Tu (394 aa).

A tr-type G domain is found at Lys10–Val204. The interval Gly19–Thr26 is G1. Gly19–Thr26 serves as a coordination point for GTP. Residue Thr26 coordinates Mg(2+). The segment at Gly60 to Asn64 is G2. The segment at Asp81–Gly84 is G3. Residues Asp81 to His85 and Asn136 to Asp139 contribute to the GTP site. Residues Asn136–Asp139 are G4. The G5 stretch occupies residues Ser174–Leu176.

This sequence belongs to the TRAFAC class translation factor GTPase superfamily. Classic translation factor GTPase family. EF-Tu/EF-1A subfamily. Monomer.

Its subcellular location is the cytoplasm. It catalyses the reaction GTP + H2O = GDP + phosphate + H(+). GTP hydrolase that promotes the GTP-dependent binding of aminoacyl-tRNA to the A-site of ribosomes during protein biosynthesis. The sequence is that of Elongation factor Tu from Buchnera aphidicola subsp. Cinara cedri (strain Cc).